A 61-amino-acid chain; its full sequence is Probradykinin-2 (61 aa).

Residues Met-1–Cys-22 form the signal peptide. Positions Glu-23–Pro-50 are excised as a propeptide. A disordered region spans residues Glu-24–Thr-61. Over residues Glu-30 to Ser-42 the composition is skewed to acidic residues. Pro-52 carries the post-translational modification 4-hydroxyproline.

It belongs to the frog skin active peptide (FSAP) family. Bradykinin-related peptide subfamily. Expressed by the skin glands.

It localises to the secreted. Functionally, may produce in vitro relaxation of rat arterial smooth muscle and constriction of intestinal smooth muscle. May target bradykinin receptors (BDKRB). This chain is Probradykinin-2, found in Pithecopus azureus (Orange-legged monkey tree frog).